A 109-amino-acid polypeptide reads, in one-letter code: Nucleoid-associated protein VC_1055 (109 aa).

The disordered stretch occupies residues 1 to 22 (MFGKGGMGNLMKQAQQMQERMQ).

This sequence belongs to the YbaB/EbfC family. In terms of assembly, homodimer.

The protein localises to the cytoplasm. Its subcellular location is the nucleoid. Functionally, binds to DNA and alters its conformation. May be involved in regulation of gene expression, nucleoid organization and DNA protection. In Vibrio cholerae serotype O1 (strain ATCC 39315 / El Tor Inaba N16961), this protein is Nucleoid-associated protein VC_1055.